Here is a 267-residue protein sequence, read N- to C-terminus: 4-hydroxy-tetrahydrodipicolinate reductase (267 aa).

Residues 8–13 and Asp34 contribute to the NAD(+) site; that span reads GAAGRM. Arg35 lines the NADP(+) pocket. NAD(+) contacts are provided by residues 98 to 100 and 122 to 125; these read GTT and AANF. Catalysis depends on His155, which acts as the Proton donor/acceptor. His156 serves as a coordination point for (S)-2,3,4,5-tetrahydrodipicolinate. The active-site Proton donor is Lys159. 165-166 provides a ligand contact to (S)-2,3,4,5-tetrahydrodipicolinate; sequence GT.

The protein belongs to the DapB family.

The protein resides in the cytoplasm. The catalysed reaction is (S)-2,3,4,5-tetrahydrodipicolinate + NAD(+) + H2O = (2S,4S)-4-hydroxy-2,3,4,5-tetrahydrodipicolinate + NADH + H(+). It catalyses the reaction (S)-2,3,4,5-tetrahydrodipicolinate + NADP(+) + H2O = (2S,4S)-4-hydroxy-2,3,4,5-tetrahydrodipicolinate + NADPH + H(+). It participates in amino-acid biosynthesis; L-lysine biosynthesis via DAP pathway; (S)-tetrahydrodipicolinate from L-aspartate: step 4/4. Functionally, catalyzes the conversion of 4-hydroxy-tetrahydrodipicolinate (HTPA) to tetrahydrodipicolinate. This is 4-hydroxy-tetrahydrodipicolinate reductase from Pseudomonas savastanoi pv. phaseolicola (strain 1448A / Race 6) (Pseudomonas syringae pv. phaseolicola (strain 1448A / Race 6)).